Reading from the N-terminus, the 343-residue chain is Protein RecA (343 aa).

66–73 (GPESSGKT) is a binding site for ATP.

The protein belongs to the RecA family.

It localises to the cytoplasm. Functionally, can catalyze the hydrolysis of ATP in the presence of single-stranded DNA, the ATP-dependent uptake of single-stranded DNA by duplex DNA, and the ATP-dependent hybridization of homologous single-stranded DNAs. It interacts with LexA causing its activation and leading to its autocatalytic cleavage. This chain is Protein RecA, found in Rickettsia conorii (strain ATCC VR-613 / Malish 7).